We begin with the raw amino-acid sequence, 368 residues long: Flavanone 3-dioxygenase (368 aa).

The Fe2OG dioxygenase domain maps to 191 to 295 (CVDMDQKVIV…RMSIATFQNP (105 aa)). Residues His218, Asp220, and His276 each contribute to the Fe cation site. Arg286 is a 2-oxoglutarate binding site.

It belongs to the iron/ascorbate-dependent oxidoreductase family. Requires Fe(2+) as cofactor. The cofactor is L-ascorbate.

The enzyme catalyses a (2S)-flavan-4-one + 2-oxoglutarate + O2 = a (2R,3R)-dihydroflavonol + succinate + CO2. Its pathway is secondary metabolite biosynthesis; flavonoid biosynthesis. In terms of biological role, involved in the conversion of (2S)-naringenin to (+)-(2R/3R)-dihydrokaempferol. This Petroselinum crispum (Parsley) protein is Flavanone 3-dioxygenase (FHT).